The chain runs to 65 residues: Sodium channel neurotoxin MeuNaTxalpha-9 (65 aa).

Residues 2-64 (RDGYIANDRN…VPIRIPGECR (63 aa)) form the LCN-type CS-alpha/beta domain. Disulfide bonds link cysteine 12–cysteine 63, cysteine 16–cysteine 36, cysteine 22–cysteine 46, and cysteine 26–cysteine 48. Arginine 64 carries the post-translational modification Arginine amide.

The protein belongs to the long (4 C-C) scorpion toxin superfamily. Sodium channel inhibitor family. Alpha subfamily. As to expression, expressed by the venom gland.

The protein resides in the secreted. In terms of biological role, alpha toxins bind voltage-independently at site-3 of sodium channels (Nav) and inhibit the inactivation of the activated channels, thereby blocking neuronal transmission. In Mesobuthus eupeus (Lesser Asian scorpion), this protein is Sodium channel neurotoxin MeuNaTxalpha-9.